Reading from the N-terminus, the 228-residue chain is Orotidine 5'-phosphate decarboxylase (228 aa).

Residues Asp20, Lys42, 70–79 (DFKVADIPET), Ser127, 180–190 (PGVGAQGGDPG), Gly202, and Arg203 each bind substrate. The active-site Proton donor is Lys72.

Belongs to the OMP decarboxylase family. Type 1 subfamily. As to quaternary structure, homodimer.

It catalyses the reaction orotidine 5'-phosphate + H(+) = UMP + CO2. Its pathway is pyrimidine metabolism; UMP biosynthesis via de novo pathway; UMP from orotate: step 2/2. In terms of biological role, catalyzes the decarboxylation of orotidine 5'-monophosphate (OMP) to uridine 5'-monophosphate (UMP). The polypeptide is Orotidine 5'-phosphate decarboxylase (pyrF) (Methanothermobacter thermautotrophicus (strain ATCC 29096 / DSM 1053 / JCM 10044 / NBRC 100330 / Delta H) (Methanobacterium thermoautotrophicum)).